The sequence spans 94 residues: Aspartyl/glutamyl-tRNA(Asn/Gln) amidotransferase subunit C (94 aa).

The protein belongs to the GatC family. In terms of assembly, heterotrimer of A, B and C subunits.

The enzyme catalyses L-glutamyl-tRNA(Gln) + L-glutamine + ATP + H2O = L-glutaminyl-tRNA(Gln) + L-glutamate + ADP + phosphate + H(+). It catalyses the reaction L-aspartyl-tRNA(Asn) + L-glutamine + ATP + H2O = L-asparaginyl-tRNA(Asn) + L-glutamate + ADP + phosphate + 2 H(+). Functionally, allows the formation of correctly charged Asn-tRNA(Asn) or Gln-tRNA(Gln) through the transamidation of misacylated Asp-tRNA(Asn) or Glu-tRNA(Gln) in organisms which lack either or both of asparaginyl-tRNA or glutaminyl-tRNA synthetases. The reaction takes place in the presence of glutamine and ATP through an activated phospho-Asp-tRNA(Asn) or phospho-Glu-tRNA(Gln). The polypeptide is Aspartyl/glutamyl-tRNA(Asn/Gln) amidotransferase subunit C (Nitratidesulfovibrio vulgaris (strain ATCC 29579 / DSM 644 / CCUG 34227 / NCIMB 8303 / VKM B-1760 / Hildenborough) (Desulfovibrio vulgaris)).